The sequence spans 170 residues: Plastocyanin, chloroplastic (170 aa).

The N-terminal 71 residues, 1 to 71, are a transit peptide targeting the chloroplast; that stretch reads MATVTSAAVA…SAMLASNAMA (71 aa). The 99-residue stretch at 72–170 folds into the Plastocyanin-like domain; sequence LEVLLGGDDG…AGMVGKVTVN (99 aa). Positions 108, 155, 158, and 163 each coordinate Cu cation.

This sequence belongs to the plastocyanin family. It depends on Cu(2+) as a cofactor.

It is found in the plastid. The protein localises to the chloroplast thylakoid membrane. Functionally, participates in electron transfer between P700 and the cytochrome b6-f complex in photosystem I. This chain is Plastocyanin, chloroplastic (PETE), found in Solanum lycopersicum (Tomato).